Reading from the N-terminus, the 52-residue chain is Gastrin/cholecystokinin-like peptide (52 aa).

This sequence belongs to the gastrin/cholecystokinin family.

It localises to the secreted. Functionally, may control digestion processes. This Trachemys scripta (Red-eared slider turtle) protein is Gastrin/cholecystokinin-like peptide.